A 127-amino-acid chain; its full sequence is Protein ApaG (127 aa).

Positions 3–127 (DDPRYRVEVE…FVLSVPRTLH (125 aa)) constitute an ApaG domain.

In Xanthomonas oryzae pv. oryzae (strain MAFF 311018), this protein is Protein ApaG.